The sequence spans 91 residues: Acylphosphatase (91 aa).

The 88-residue stretch at 3 to 90 folds into the Acylphosphatase-like domain; that stretch reads RVLIRVKGKV…EIYLDFSITQ (88 aa). Catalysis depends on residues R18 and N36.

Belongs to the acylphosphatase family.

The enzyme catalyses an acyl phosphate + H2O = a carboxylate + phosphate + H(+). The protein is Acylphosphatase (acyP) of Shewanella amazonensis (strain ATCC BAA-1098 / SB2B).